A 78-amino-acid chain; its full sequence is MDLKEQIVEILNTIIGEDISDQMDDDFFENGLLDSMATVELLLDLESKFNIQAPVSEFNRDEWNTPNKVVAKVESLIG.

The Carrier domain maps to 1 to 77; it reads MDLKEQIVEI…KVVAKVESLI (77 aa). At serine 35 the chain carries O-(pantetheine 4'-phosphoryl)serine.

This sequence belongs to the DltC family. Post-translationally, 4'-phosphopantetheine is transferred from CoA to a specific serine of apo-DCP.

The protein resides in the cytoplasm. Its pathway is cell wall biogenesis; lipoteichoic acid biosynthesis. Functionally, carrier protein involved in the D-alanylation of lipoteichoic acid (LTA). The loading of thioester-linked D-alanine onto DltC is catalyzed by D-alanine--D-alanyl carrier protein ligase DltA. The DltC-carried D-alanyl group is further transferred to cell membrane phosphatidylglycerol (PG) by forming an ester bond, probably catalyzed by DltD. D-alanylation of LTA plays an important role in modulating the properties of the cell wall in Gram-positive bacteria, influencing the net charge of the cell wall. The sequence is that of D-alanyl carrier protein from Leuconostoc mesenteroides subsp. mesenteroides (strain ATCC 8293 / DSM 20343 / BCRC 11652 / CCM 1803 / JCM 6124 / NCDO 523 / NBRC 100496 / NCIMB 8023 / NCTC 12954 / NRRL B-1118 / 37Y).